The primary structure comprises 303 residues: MNPQELKSIMGSGLLSFPLTDFDANGDFNKKGYEKRLEWLAPYGASALFAAGGTGEFFSLTGDEYPGIIQTAVDTCRGVVPIIAGAGGPTRFAIQCAQAAEKAGAHGILLLPHYLTEAGQEGLAAHVEAVCKSVKFGVIVYNRATSRLKPETLAALAERNPNLVGFKDGVGDIEAMVAIYQKMGDRFAYLGGLPTAEVYAAAYKALGTPVYSSAVFNFIPKTAMDFYKAVAADDLPTQHRLLKNFFMPYLDLRNRVPGYAVSIVKAGAKIVGHDAGPVRTPLTDLQPAEMEQLKALIDALGPQ.

Belongs to the DapA family.

The enzyme catalyses 5-dehydro-4-deoxy-D-glucarate + H(+) = 2,5-dioxopentanoate + CO2 + H2O. Its pathway is carbohydrate acid metabolism; D-glucarate degradation; 2,5-dioxopentanoate from D-glucarate: step 2/2. This is Probable 5-dehydro-4-deoxyglucarate dehydratase from Variovorax paradoxus (strain S110).